Reading from the N-terminus, the 287-residue chain is ATP synthase gamma chain (287 aa).

The protein belongs to the ATPase gamma chain family. F-type ATPases have 2 components, CF(1) - the catalytic core - and CF(0) - the membrane proton channel. CF(1) has five subunits: alpha(3), beta(3), gamma(1), delta(1), epsilon(1). CF(0) has three main subunits: a, b and c.

The protein resides in the cell inner membrane. In terms of biological role, produces ATP from ADP in the presence of a proton gradient across the membrane. The gamma chain is believed to be important in regulating ATPase activity and the flow of protons through the CF(0) complex. This chain is ATP synthase gamma chain, found in Geotalea uraniireducens (strain Rf4) (Geobacter uraniireducens).